The sequence spans 108 residues: MTNSQSDAALAAVLDRFDPSAGGPGAYDTPLGITNPPIDELLDRVSSKYALVIYAAKRARQINDYYNQLGEGILEYVGPLVEPGLQEKPLSIALREIHGDLLEHTEGE.

This sequence belongs to the RNA polymerase subunit omega family. In terms of assembly, the RNAP catalytic core consists of 2 alpha, 1 beta, 1 beta' and 1 omega subunit. When a sigma factor is associated with the core the holoenzyme is formed, which can initiate transcription.

It carries out the reaction RNA(n) + a ribonucleoside 5'-triphosphate = RNA(n+1) + diphosphate. Its function is as follows. Promotes RNA polymerase assembly. Latches the N- and C-terminal regions of the beta' subunit thereby facilitating its interaction with the beta and alpha subunits. This Mycolicibacterium paratuberculosis (strain ATCC BAA-968 / K-10) (Mycobacterium paratuberculosis) protein is DNA-directed RNA polymerase subunit omega.